A 488-amino-acid polypeptide reads, in one-letter code: Serine protease HTR4 (488 aa).

A signal peptide spans 1–35 (MSRSKMSSQRLWAVRAQFLLLWLLLWAAPVPWAEA). Residues 40–118 (VSLPCPDACD…RAWLGTCGCA (79 aa)) form the IGFBP N-terminal domain. Intrachain disulfides connect C44–C70, C48–C72, C53–C73, C59–C76, C84–C98, and C92–C115. Residues 213 to 373 (GSGFIVSEDG…IPSDRIRQFL (161 aa)) are serine protease. Residues H229, D259, and S337 each act as charge relay system in the active site. The PDZ domain occupies 384 to 476 (KAPLQKKYLG…LSIIVLRGSQ (93 aa)).

Belongs to the peptidase S1C family.

The protein resides in the secreted. Serine protease. The chain is Serine protease HTR4 (Htra4) from Rattus norvegicus (Rat).